A 281-amino-acid polypeptide reads, in one-letter code: Undecaprenyl-diphosphatase (281 aa).

Helical transmembrane passes span 5 to 25, 48 to 68, 92 to 112, 118 to 138, 154 to 174, 192 to 212, 226 to 246, and 261 to 281; these read LFVL…FLPI, VKMY…LLYW, FWFM…LLDA, LMTP…MIYA, VTPK…IPGM, VVAA…YSLL, AELI…VAVI, and FAIY…MGFF.

This sequence belongs to the UppP family.

It is found in the cell membrane. It catalyses the reaction di-trans,octa-cis-undecaprenyl diphosphate + H2O = di-trans,octa-cis-undecaprenyl phosphate + phosphate + H(+). Its function is as follows. Catalyzes the dephosphorylation of undecaprenyl diphosphate (UPP). Confers resistance to bacitracin. The sequence is that of Undecaprenyl-diphosphatase from Ruminiclostridium cellulolyticum (strain ATCC 35319 / DSM 5812 / JCM 6584 / H10) (Clostridium cellulolyticum).